Reading from the N-terminus, the 559-residue chain is MKFMKIGTKPDTFYTQEASRILITDTPNDLVIRINNTTYHLHRSCLVPKCGLLRRLCTDLEESDTVTIELNDIPGGADAFELCAKFCYDITINLSAHNLVNALCASKFLRMSDSVDKGNLLPKLEAFFHSCILQGWKDSIVTLQSTTKLPEWCENLGIVRKCIDSIVEKILTPTSEVSWSHTYTRPGYAKRQHHSVPRDWWTEDISDLDLDLFRCVITAARSTFTLPPQLIGEALHVYTCRWLPYFKSNSHSGFSVKENEAALERHRRLVNTVVNMIPADKGSVSEGFLLRLVSIASYVRASLTTKTELIRKSSLQLEEATLEDLLLPSHSSSHLHRYDTDLVATVLESFLMLWRRQSSAHLSSNNTQLLHSIRKVAKLIDSYLQAVAQDVHMPVSKFVSLSEAVPDIARQSHDRLYKAINIFLKVHPEISKEEKKRLCRSLDCQKLSAQVRAHAVKNERMPLRTVVQALFFDQESGSKGASSRSESQELFTRGKETPTDEHSMMHKLHLGPASTGKAKNVLEEGCKRGEEKTRSSTDPKKIVWKGTGSEHKHHISRDR.

The region spanning 28 to 96 is the BTB domain; it reads NDLVIRINNT…CYDITINLSA (69 aa). An NPH3 domain is found at 199–476; that stretch reads DWWTEDISDL…VQALFFDQES (278 aa). The residue at position 417 (Tyr417) is a Phosphotyrosine. Residues 477 to 489 are compositionally biased toward low complexity; that stretch reads GSKGASSRSESQE. Disordered stretches follow at residues 477-502 and 524-559; these read GSKG…TDEH and EGCK…SRDR. Composition is skewed to basic and acidic residues over residues 492-502 and 524-541; these read TRGKETPTDEH and EGCK…DPKK.

The protein belongs to the NPH3 family.

The protein operates within protein modification; protein ubiquitination. Functionally, may act as a substrate-specific adapter of an E3 ubiquitin-protein ligase complex (CUL3-RBX1-BTB) which mediates the ubiquitination and subsequent proteasomal degradation of target proteins. This Arabidopsis thaliana (Mouse-ear cress) protein is BTB/POZ domain-containing protein At5g47800.